Reading from the N-terminus, the 221-residue chain is High frequency lysogenization protein HflD homolog (221 aa).

Belongs to the HflD family.

It localises to the cytoplasm. Its subcellular location is the cell inner membrane. This Acidithiobacillus ferrooxidans (strain ATCC 23270 / DSM 14882 / CIP 104768 / NCIMB 8455) (Ferrobacillus ferrooxidans (strain ATCC 23270)) protein is High frequency lysogenization protein HflD homolog.